Consider the following 1047-residue polypeptide: FACT complex subunit SPT16 (1047 aa).

Alanine 2 bears the N-acetylalanine mark. At lysine 139 the chain carries N6-acetyllysine. Serine 188 is subject to Phosphoserine. An N6-acetyllysine mark is found at lysine 196 and lysine 223. Serine 455 is subject to Phosphoserine. The stretch at 465–507 forms a coiled coil; sequence RNEMTAEEKRRAHQKELAAQLNEEAKRRLTEQKGEQQIQKARK. Residues 491–518 form a disordered region; that stretch reads RRLTEQKGEQQIQKARKSNVSYKNPSLM. A Glycyl lysine isopeptide (Lys-Gly) (interchain with G-Cter in SUMO2) cross-link involves residue lysine 497. Positions 499–514 are enriched in polar residues; sequence EQQIQKARKSNVSYKN. Phosphoserine is present on serine 508. Lysine 513 is subject to N6-acetyllysine; alternate. Lysine 513 participates in a covalent cross-link: Glycyl lysine isopeptide (Lys-Gly) (interchain with G-Cter in SUMO2); alternate. Lysine 647 is covalently cross-linked (Glycyl lysine isopeptide (Lys-Gly) (interchain with G-Cter in SUMO2)). Serine 650 and serine 658 each carry phosphoserine. Residues lysine 732 and lysine 786 each carry the N6-acetyllysine modification. Residue threonine 903 is modified to Phosphothreonine. Lysine 904 carries the N6-acetyllysine modification. The segment at 918–1047 is disordered; the sequence is EQGGWSFLEP…SSAPPKKKRK (130 aa). The span at 927–973 shows a compositional bias: acidic residues; that stretch reads PEGEGSDAEDGDSESEIEDETFNPSEDDYEEEEEDSDEDYSSEAEES. 4 positions are modified to phosphoserine: serine 979, serine 982, serine 986, and serine 1015. Basic and acidic residues predominate over residues 985 to 1005; the sequence is ESGKDWDELEEEARKADRESR. The segment covering 1024-1039 has biased composition (low complexity); that stretch reads VHSSGRGSNRGSRHSS.

This sequence belongs to the peptidase M24 family. SPT16 subfamily. Interacts with MYOG (via C-terminal region). Component of the FACT complex, a stable heterodimer of SSRP1 and SUPT16H. Also a component of a CK2-SPT16-SSRP1 complex which forms following UV irradiation, composed of SSRP1, SUPT16H, CSNK2A1, CSNK2A2 and CSNK2B. Interacts with NEK9. Binds to histone H2A-H2B. Identified in a centromere complex containing histones H2A, H2B and H4, and at least CENPA, CENPB, CENPC, CENPT, CENPN, HJURP, SUPT16H, SSRP1 and RSF1. Interacts with GTF2E2. Post-translationally, ADP-ribosylated. ADP-ribosylation by PARP1 is induced by genotoxic stress and correlates with dissociation of FACT from chromatin. Widely expressed. Expressed in brain, liver, heart, kidneys, lungs, spleen, thymus, ovary, and testes, with highest levels of expression observed in thymus.

The protein resides in the nucleus. Its subcellular location is the chromosome. Functionally, component of the FACT complex, a general chromatin factor that acts to reorganize nucleosomes. The FACT complex is involved in multiple processes that require DNA as a template such as mRNA elongation, DNA replication and DNA repair. During transcription elongation the FACT complex acts as a histone chaperone that both destabilizes and restores nucleosomal structure. It facilitates the passage of RNA polymerase II and transcription by promoting the dissociation of one histone H2A-H2B dimer from the nucleosome, then subsequently promotes the reestablishment of the nucleosome following the passage of RNA polymerase II. The FACT complex is probably also involved in phosphorylation of 'Ser-392' of p53/TP53 via its association with CK2 (casein kinase II). In Mus musculus (Mouse), this protein is FACT complex subunit SPT16 (Supt16h).